The sequence spans 236 residues: 2-C-methyl-D-erythritol 4-phosphate cytidylyltransferase (236 aa).

It belongs to the IspD/TarI cytidylyltransferase family. IspD subfamily. Homodimer.

It catalyses the reaction 2-C-methyl-D-erythritol 4-phosphate + CTP + H(+) = 4-CDP-2-C-methyl-D-erythritol + diphosphate. Its pathway is isoprenoid biosynthesis; isopentenyl diphosphate biosynthesis via DXP pathway; isopentenyl diphosphate from 1-deoxy-D-xylulose 5-phosphate: step 2/6. Catalyzes the formation of 4-diphosphocytidyl-2-C-methyl-D-erythritol from CTP and 2-C-methyl-D-erythritol 4-phosphate (MEP). The chain is 2-C-methyl-D-erythritol 4-phosphate cytidylyltransferase from Salmonella agona (strain SL483).